A 1040-amino-acid chain; its full sequence is Multidrug resistance protein MdtB (1040 aa).

A run of 12 helical transmembrane segments spans residues 25–45 (LLMA…PVAA), 347–367 (LMLA…NIPA), 369–389 (IIPG…MVFL), 396–416 (LTLM…IVVI), 440–460 (IGFT…PLLF), 472–492 (FAVT…TLTP), 537–557 (WLTL…WIVI), 863–883 (LGST…VLGV), 888–908 (FIHP…ALLA), 910–930 (IIAG…LIGI), 968–988 (ILMT…STGV), and 998–1018 (IAMV…TPVI).

Belongs to the resistance-nodulation-cell division (RND) (TC 2.A.6) family. MdtB subfamily. As to quaternary structure, part of a tripartite efflux system composed of MdtA, MdtB and MdtC. MdtB forms a heteromultimer with MdtC.

The protein localises to the cell inner membrane. This chain is Multidrug resistance protein MdtB, found in Salmonella paratyphi B (strain ATCC BAA-1250 / SPB7).